The chain runs to 276 residues: MLSIRTVLGPLATILLTVLGPFGAHGSGLADKVIWAVNAGGESHVDVHGIHYRKDPLEGRVGRASDYGMKLPILRSNPEDQVLYQTERYNEDSFGYDIPIKEEGEYVLVLKFAEVYFAQSQQKVFDVRVNGHTVVKDLDIFDRVGHSTAHDEIIPISIKKGKLSVQGEVSTFTGKLSVEFVKGYYDNPKVCALFIMKGTADDVPMLQPHPGLEKKEEEEEEEEEEGSTSKKQINKNRVQSGPRTPNPYASDNSSLMFPILVAFGVFIPTLFCLCRL.

Residues 1 to 26 (MLSIRTVLGPLATILLTVLGPFGAHG) form the signal peptide. Residues 27-253 (SGLADKVIWA…TPNPYASDNS (227 aa)) lie on the Lumenal side of the membrane. The a carbohydrate site is built by tyrosine 67, tyrosine 89, tyrosine 116, phenylalanine 117, and aspartate 186. Positions 204–247 (PMLQPHPGLEKKEEEEEEEEEEGSTSKKQINKNRVQSGPRTPNP) are disordered. Residues 216–226 (EEEEEEEEEEG) show a composition bias toward acidic residues. The segment covering 229 to 247 (SKKQINKNRVQSGPRTPNP) has biased composition (polar residues). A glycan (N-linked (GlcNAc...) asparagine) is linked at asparagine 252. Residues 254–274 (SLMFPILVAFGVFIPTLFCLC) traverse the membrane as a helical segment. Topologically, residues 275-276 (RL) are cytoplasmic.

Belongs to the malectin family. In terms of tissue distribution, widely expressed throughout development including the anterior neuroectoderm and neural crest at stages 18 and 20, and the retina, hatching gland, otic vesicle, epibranchial placodes, pronephros and tail tip of later states. At stage 41, expressed in the liver, pancreas, branchial arches and proctodeum. Expressed broadly in adults in fat, intestine, gall bladder, eye, muscle, kidney, stomach, liver, heart, pancreas and lung.

The protein localises to the endoplasmic reticulum membrane. Functionally, carbohydrate-binding protein with a strong ligand preference for Glc2-N-glycan. May play a role in the early steps of protein N-glycosylation. Can bind di- or higher oligomers but not monomers of glucose, including maltose, maltotriose, maltotetraose, maltoheptaose, nigerose, kojibose, cellobiose and isomaltose, although based on their subcellular locations, these are unlikely to all be physiological ligands. The sequence is that of Malectin-A from Xenopus laevis (African clawed frog).